Here is a 460-residue protein sequence, read N- to C-terminus: Kynureninase (460 aa).

Residues Leu127, Thr128, Phe165–Asp168, Asp249, His252, and Tyr274 contribute to the pyridoxal 5'-phosphate site. Lys275 carries the N6-(pyridoxal phosphate)lysine modification. Pyridoxal 5'-phosphate-binding residues include Trp304 and Asn332.

Belongs to the kynureninase family. Homodimer. Requires pyridoxal 5'-phosphate as cofactor.

The protein localises to the cytoplasm. The catalysed reaction is L-kynurenine + H2O = anthranilate + L-alanine + H(+). It carries out the reaction 3-hydroxy-L-kynurenine + H2O = 3-hydroxyanthranilate + L-alanine + H(+). The protein operates within amino-acid degradation; L-kynurenine degradation; L-alanine and anthranilate from L-kynurenine: step 1/1. Its pathway is cofactor biosynthesis; NAD(+) biosynthesis; quinolinate from L-kynurenine: step 2/3. In terms of biological role, catalyzes the cleavage of L-kynurenine (L-Kyn) and L-3-hydroxykynurenine (L-3OHKyn) into anthranilic acid (AA) and 3-hydroxyanthranilic acid (3-OHAA), respectively. This Monosiga brevicollis (Choanoflagellate) protein is Kynureninase.